The following is a 395-amino-acid chain: ATP-dependent RNA helicase eIF4A (395 aa).

Serine 2 carries the post-translational modification N-acetylserine. The Q motif signature appears at 22–50 (YKFDDMELDENLLRGVFGYGFEEPSAIQQ). In terms of domain architecture, Helicase ATP-binding spans 53-222 (IMPIIEGHDV…TKFMRNPVRI (170 aa)). Position 66–73 (66–73 (AQSGTGKT)) interacts with ATP. Phosphothreonine is present on threonine 73. Phosphoserine is present on residues serine 77 and serine 129. Position 146 is a phosphothreonine (threonine 146). The short motif at 170 to 173 (DEAD) is the DEAD box element. The 162-residue stretch at 233–394 (GIKQFYVNVE…ELPSDIATLL (162 aa)) folds into the Helicase C-terminal domain.

The protein belongs to the DEAD box helicase family. eIF4A subfamily. Component of the eIF4F complex, which composition varies with external and internal environmental conditions. It is composed of at least eIF4A, eIF4E and eIF4G.

The protein resides in the cytoplasm. The enzyme catalyses ATP + H2O = ADP + phosphate + H(+). Its function is as follows. ATP-dependent RNA helicase which is a subunit of the eIF4F complex involved in cap recognition and is required for mRNA binding to ribosome. In the current model of translation initiation, eIF4A unwinds RNA secondary structures in the 5'-UTR of mRNAs which is necessary to allow efficient binding of the small ribosomal subunit, and subsequent scanning for the initiator codon. In Saccharomyces cerevisiae (strain YJM789) (Baker's yeast), this protein is ATP-dependent RNA helicase eIF4A (TIF1).